Here is a 791-residue protein sequence, read N- to C-terminus: Phenylalanine--tRNA ligase beta subunit (791 aa).

One can recognise a tRNA-binding domain in the interval 39–148 (AADFSGVVVA…ADAPVGADIR (110 aa)). The B5 domain maps to 401-476 (PLRAPVRLRE…RVYGYDAIPR (76 aa)). Aspartate 454, aspartate 460, glutamate 463, and glutamate 464 together coordinate Mg(2+). The FDX-ACB domain maps to 697–790 (SRFPLVRRDL…LAADFGAKLR (94 aa)).

It belongs to the phenylalanyl-tRNA synthetase beta subunit family. Type 1 subfamily. Tetramer of two alpha and two beta subunits. Mg(2+) is required as a cofactor.

It localises to the cytoplasm. It catalyses the reaction tRNA(Phe) + L-phenylalanine + ATP = L-phenylalanyl-tRNA(Phe) + AMP + diphosphate + H(+). The sequence is that of Phenylalanine--tRNA ligase beta subunit from Methylococcus capsulatus (strain ATCC 33009 / NCIMB 11132 / Bath).